A 40-amino-acid chain; its full sequence is Protein 4.1 (40 aa).

This is Protein 4.1 from Escherichia phage T7 (Bacteriophage T7).